A 345-amino-acid polypeptide reads, in one-letter code: DNA-directed RNA polymerase subunit alpha (345 aa).

Residues 1–234 form an alpha N-terminal domain (alpha-NTD) region; sequence MRKNEMSTSK…DLLTTFLYVR (234 aa). The segment at 266 to 345 is alpha C-terminal domain (alpha-CTD); the sequence is LEERVLENRF…DKKIVLNRRK (80 aa).

This sequence belongs to the RNA polymerase alpha chain family. In terms of assembly, in plastids the minimal PEP RNA polymerase catalytic core is composed of four subunits: alpha, beta, beta', and beta''. When a (nuclear-encoded) sigma factor is associated with the core the holoenzyme is formed, which can initiate transcription.

Its subcellular location is the plastid. The protein localises to the chloroplast. The catalysed reaction is RNA(n) + a ribonucleoside 5'-triphosphate = RNA(n+1) + diphosphate. DNA-dependent RNA polymerase catalyzes the transcription of DNA into RNA using the four ribonucleoside triphosphates as substrates. The chain is DNA-directed RNA polymerase subunit alpha from Adiantum capillus-veneris (Maidenhair fern).